A 398-amino-acid polypeptide reads, in one-letter code: L-glutamine--4-(methylsulfanyl)-2-oxobutanoate aminotransferase (398 aa).

Lys-240 bears the N6-(pyridoxal phosphate)lysine mark.

Belongs to the class-I pyridoxal-phosphate-dependent aminotransferase family. MtnE subfamily. Pyridoxal 5'-phosphate serves as cofactor.

The catalysed reaction is 4-methylsulfanyl-2-oxobutanoate + L-glutamine = 2-oxoglutaramate + L-methionine. It participates in amino-acid biosynthesis; L-methionine biosynthesis via salvage pathway; L-methionine from S-methyl-5-thio-alpha-D-ribose 1-phosphate: step 6/6. Its function is as follows. Involved in the methylthioribose (MTR) recycling pathway. Catalyzes the formation of methionine from 2-keto-4-methylthiobutyrate (KMTB). The chain is L-glutamine--4-(methylsulfanyl)-2-oxobutanoate aminotransferase from Bacillus subtilis (strain 168).